The sequence spans 110 residues: Cytochrome c6 (110 aa).

Residues 1–25 (MKKKLSVLFTVFSFFVIGFAQIAFA) form the signal peptide. Heme c-binding residues include Cys39, Cys42, His43, and Met83.

This sequence belongs to the cytochrome c family. PetJ subfamily. In terms of assembly, monomer. Binds 1 heme c group covalently per subunit.

It localises to the plastid. Its subcellular location is the chloroplast thylakoid lumen. Functionally, functions as an electron carrier between membrane-bound cytochrome b6-f and photosystem I in oxygenic photosynthesis. In Pyropia yezoensis (Susabi-nori), this protein is Cytochrome c6 (petJ).